The chain runs to 131 residues: DNA-directed RNA polymerase subunit omega (131 aa).

Belongs to the RNA polymerase subunit omega family. The RNAP catalytic core consists of 2 alpha, 1 beta, 1 beta' and 1 omega subunit. When a sigma factor is associated with the core the holoenzyme is formed, which can initiate transcription.

The enzyme catalyses RNA(n) + a ribonucleoside 5'-triphosphate = RNA(n+1) + diphosphate. Functionally, promotes RNA polymerase assembly. Latches the N- and C-terminal regions of the beta' subunit thereby facilitating its interaction with the beta and alpha subunits. This Chelativorans sp. (strain BNC1) protein is DNA-directed RNA polymerase subunit omega.